The primary structure comprises 327 residues: L-lactate dehydrogenase 1 (327 aa).

NAD(+) contacts are provided by residues Val21, Asp42, Lys47, Tyr72, and 86–87 (GA). Residues Gln89, Arg95, and 127 to 130 (NPVD) each bind substrate. NAD(+)-binding positions include 125-127 (AAN) and Ser150. Residue 155–158 (DSAR) coordinates substrate. Beta-D-fructose 1,6-bisphosphate contacts are provided by Arg160 and His175. Catalysis depends on His182, which acts as the Proton acceptor. Phosphotyrosine is present on Tyr227. Thr236 serves as a coordination point for substrate.

This sequence belongs to the LDH/MDH superfamily. LDH family. Homotetramer.

Its subcellular location is the cytoplasm. It catalyses the reaction (S)-lactate + NAD(+) = pyruvate + NADH + H(+). The protein operates within fermentation; pyruvate fermentation to lactate; (S)-lactate from pyruvate: step 1/1. With respect to regulation, allosterically activated by fructose 1,6-bisphosphate (FBP). Its function is as follows. Catalyzes the conversion of lactate to pyruvate. In Enterococcus faecalis (strain ATCC 700802 / V583), this protein is L-lactate dehydrogenase 1.